The primary structure comprises 316 residues: Olfactory receptor 10A7 (316 aa).

The Extracellular segment spans residues 1–25 (MICENHTRVTEFILLGFTNNPEMQV). Asn5 is a glycosylation site (N-linked (GlcNAc...) asparagine). Residues 26–46 (SLFIFFLAIYTVTLLGNFLIV) form a helical membrane-spanning segment. Residues 47 to 54 (TVTSVDLA) are Cytoplasmic-facing. Residues 55-75 (LQTPMYFFLQNLSLLEVCFTL) form a helical membrane-spanning segment. The Extracellular portion of the chain corresponds to 76–99 (VMVPKMLVDLVSPRKIISFVGCGT). The helical transmembrane segment at 100–120 (QMYFFFFFGSSECFLLSMMAY) threads the bilayer. Over 121 to 139 (DRFVAICNPLHYSVIMNRS) the chain is Cytoplasmic. The helical transmembrane segment at 140–160 (LCLWMAIGSWMSGVPVSMLQT) threads the bilayer. The Extracellular portion of the chain corresponds to 161–197 (AWMMALPFCGPNAVDHFFCDGPPVLKLVTVDTTMYEM). Residues 198–217 (QALASTLLFIMFPFCLILVS) traverse the membrane as a helical segment. Over 218–237 (YTRIIITILRMSSATGRQKA) the chain is Cytoplasmic. Residues 238–258 (FSTCSSHLIVVSLFYGTASLT) traverse the membrane as a helical segment. Topologically, residues 259–271 (YLRPKSNQSPESK) are extracellular. A helical transmembrane segment spans residues 272-292 (KLVSLSYTVITPMLNPIIYGL). The Cytoplasmic segment spans residues 293-316 (RNNEVKGAVKRTITQKVLQKLDVF).

Belongs to the G-protein coupled receptor 1 family.

It localises to the cell membrane. Odorant receptor. The polypeptide is Olfactory receptor 10A7 (OR10A7) (Homo sapiens (Human)).